The chain runs to 403 residues: Tripartite motif-containing protein 59 (403 aa).

The RING-type zinc finger occupies 10–60; it reads CPICYSIFEDPRVLPCSHTFCRNCLENILQASGNFYIWRPLRIPLKCPNCR. The B box-type zinc finger occupies 92-134; the sequence is PDIVTCPEHYRQPLNVYCLLDKKLVCGHCLTIGQHHGHPIDDL. Residues Cys-97, His-100, Cys-120, and His-126 each coordinate Zn(2+). A coiled-coil region spans residues 163-246; the sequence is LIEKLKEQKS…ALTISLQEES (84 aa). The chain crosses the membrane as a helical span at residues 329 to 349; sequence ILNIVVVTLISVILMSILFFN.

The protein belongs to the TRIM/RBCC family. In terms of assembly, interacts with ECSIT.

It localises to the endoplasmic reticulum membrane. The enzyme catalyses S-ubiquitinyl-[E2 ubiquitin-conjugating enzyme]-L-cysteine + [acceptor protein]-L-lysine = [E2 ubiquitin-conjugating enzyme]-L-cysteine + N(6)-ubiquitinyl-[acceptor protein]-L-lysine.. The protein operates within protein modification; protein ubiquitination. In terms of biological role, E3 ubiquitin ligase involved in different processes such as development and immune response. Serves as a negative regulator for innate immune signaling pathways by suppressing RLR-induced activation of IRF3/7 and NF-kappa-B via interaction with adapter ECSIT. Regulates autophagy through modulating both the transcription and the ubiquitination of BECN1. On the one hand, regulates the transcription of BECN1 through negatively modulating the NF-kappa-B pathway. On the other hand, regulates TRAF6-mediated 'Lys-63'-linked ubiquitination of BECN1, thus affecting the formation of the BECN1-PIK3C3 complex. In addition, mediates 'Lys-48'-linked ubiquitination of TRAF6 and thereby promotes TRAF6 proteasomal degradation. Also acts as a critical regulator for early embryo development from blastocyst stage to gastrula through modulating F-actin assembly and WASH1 'Lys-63'-linked ubiquitination. The sequence is that of Tripartite motif-containing protein 59 (TRIM59) from Homo sapiens (Human).